The chain runs to 329 residues: Anthranilate phosphoribosyltransferase (329 aa).

Residues Gly-78, 81 to 82, Thr-86, 88 to 91, 106 to 114, and Ser-118 contribute to the 5-phospho-alpha-D-ribose 1-diphosphate site; these read GD, NLST, and KHGNRSASG. Residue Gly-78 coordinates anthranilate. Residue Ser-90 participates in Mg(2+) binding. Position 109 (Asn-109) interacts with anthranilate. Anthranilate is bound at residue Arg-164. Mg(2+)-binding residues include Asp-221 and Glu-222.

Belongs to the anthranilate phosphoribosyltransferase family. In terms of assembly, homodimer. Requires Mg(2+) as cofactor.

The enzyme catalyses N-(5-phospho-beta-D-ribosyl)anthranilate + diphosphate = 5-phospho-alpha-D-ribose 1-diphosphate + anthranilate. The protein operates within amino-acid biosynthesis; L-tryptophan biosynthesis; L-tryptophan from chorismate: step 2/5. Catalyzes the transfer of the phosphoribosyl group of 5-phosphorylribose-1-pyrophosphate (PRPP) to anthranilate to yield N-(5'-phosphoribosyl)-anthranilate (PRA). In Pyrobaculum islandicum (strain DSM 4184 / JCM 9189 / GEO3), this protein is Anthranilate phosphoribosyltransferase.